The sequence spans 95 residues: Small ribosomal subunit protein uS15 (95 aa).

Belongs to the universal ribosomal protein uS15 family. In terms of assembly, part of the 30S ribosomal subunit. Forms a bridge to the 50S subunit in the 70S ribosome, contacting the 23S rRNA.

In terms of biological role, one of the primary rRNA binding proteins, it binds directly to 16S rRNA where it helps nucleate assembly of the platform of the 30S subunit by binding and bridging several RNA helices of the 16S rRNA. Functionally, forms an intersubunit bridge (bridge B4) with the 23S rRNA of the 50S subunit in the ribosome. In Streptomyces coelicolor (strain ATCC BAA-471 / A3(2) / M145), this protein is Small ribosomal subunit protein uS15.